Here is a 195-residue protein sequence, read N- to C-terminus: Glycerol-3-phosphate acyltransferase 1 (195 aa).

The next 5 helical transmembrane spans lie at 6-26, 52-72, 74-94, 117-137, and 168-188; these read VILT…GHFL, LGIA…FLVV, LGLK…AVAG, LAVY…LTFL, and FGLG…ISLF.

Belongs to the PlsY family. Probably interacts with PlsX.

The protein localises to the cell membrane. The enzyme catalyses an acyl phosphate + sn-glycerol 3-phosphate = a 1-acyl-sn-glycero-3-phosphate + phosphate. It participates in lipid metabolism; phospholipid metabolism. In terms of biological role, catalyzes the transfer of an acyl group from acyl-phosphate (acyl-PO(4)) to glycerol-3-phosphate (G3P) to form lysophosphatidic acid (LPA). This enzyme utilizes acyl-phosphate as fatty acyl donor, but not acyl-CoA or acyl-ACP. This chain is Glycerol-3-phosphate acyltransferase 1, found in Moorella thermoacetica (strain ATCC 39073 / JCM 9320).